Here is a 520-residue protein sequence, read N- to C-terminus: ATP synthase subunit alpha 2 (520 aa).

176–183 (GDRQTGKT) contacts ATP.

It belongs to the ATPase alpha/beta chains family. In terms of assembly, F-type ATPases have 2 components, CF(1) - the catalytic core - and CF(0) - the membrane proton channel. CF(1) has five subunits: alpha(3), beta(3), gamma(1), delta(1), epsilon(1). CF(0) has three main subunits: a(1), b(2) and c(9-12). The alpha and beta chains form an alternating ring which encloses part of the gamma chain. CF(1) is attached to CF(0) by a central stalk formed by the gamma and epsilon chains, while a peripheral stalk is formed by the delta and b chains.

The protein resides in the cell inner membrane. It catalyses the reaction ATP + H2O + 4 H(+)(in) = ADP + phosphate + 5 H(+)(out). In terms of biological role, produces ATP from ADP in the presence of a proton gradient across the membrane. The alpha chain is a regulatory subunit. The protein is ATP synthase subunit alpha 2 of Polaromonas naphthalenivorans (strain CJ2).